We begin with the raw amino-acid sequence, 134 residues long: Putative pre-16S rRNA nuclease (134 aa).

Belongs to the YqgF nuclease family.

Its subcellular location is the cytoplasm. Its function is as follows. Could be a nuclease involved in processing of the 5'-end of pre-16S rRNA. The sequence is that of Putative pre-16S rRNA nuclease from Helicobacter pylori (strain HPAG1).